The sequence spans 302 residues: Methionyl-tRNA formyltransferase (302 aa).

108-111 (SLLP) contributes to the (6S)-5,6,7,8-tetrahydrofolate binding site.

It belongs to the Fmt family.

The enzyme catalyses L-methionyl-tRNA(fMet) + (6R)-10-formyltetrahydrofolate = N-formyl-L-methionyl-tRNA(fMet) + (6S)-5,6,7,8-tetrahydrofolate + H(+). Attaches a formyl group to the free amino group of methionyl-tRNA(fMet). The formyl group appears to play a dual role in the initiator identity of N-formylmethionyl-tRNA by promoting its recognition by IF2 and preventing the misappropriation of this tRNA by the elongation apparatus. The sequence is that of Methionyl-tRNA formyltransferase from Cereibacter sphaeroides (strain ATCC 17025 / ATH 2.4.3) (Rhodobacter sphaeroides).